The sequence spans 126 residues: Urease subunit beta (126 aa).

The protein belongs to the urease beta subunit family. As to quaternary structure, heterotrimer of UreA (gamma), UreB (beta) and UreC (alpha) subunits. Three heterotrimers associate to form the active enzyme.

It is found in the cytoplasm. It catalyses the reaction urea + 2 H2O + H(+) = hydrogencarbonate + 2 NH4(+). It participates in nitrogen metabolism; urea degradation; CO(2) and NH(3) from urea (urease route): step 1/1. This Haloquadratum walsbyi (strain DSM 16790 / HBSQ001) protein is Urease subunit beta.